The sequence spans 126 residues: Large ribosomal subunit protein bL20 (126 aa).

This sequence belongs to the bacterial ribosomal protein bL20 family.

Binds directly to 23S ribosomal RNA and is necessary for the in vitro assembly process of the 50S ribosomal subunit. It is not involved in the protein synthesizing functions of that subunit. This chain is Large ribosomal subunit protein bL20, found in Nocardia farcinica (strain IFM 10152).